The following is a 189-amino-acid chain: ATP-dependent protease subunit HslV (189 aa).

Residue T12 is part of the active site. Positions 172, 175, and 178 each coordinate Na(+).

This sequence belongs to the peptidase T1B family. HslV subfamily. In terms of assembly, a double ring-shaped homohexamer of HslV is capped on each side by a ring-shaped HslU homohexamer. The assembly of the HslU/HslV complex is dependent on binding of ATP.

The protein resides in the cytoplasm. It catalyses the reaction ATP-dependent cleavage of peptide bonds with broad specificity.. Allosterically activated by HslU binding. Functionally, protease subunit of a proteasome-like degradation complex believed to be a general protein degrading machinery. This is ATP-dependent protease subunit HslV from Ehrlichia ruminantium (strain Welgevonden).